A 106-amino-acid polypeptide reads, in one-letter code: Nucleoid-associated protein RPD_0086 (106 aa).

Belongs to the YbaB/EbfC family. Homodimer.

The protein localises to the cytoplasm. It is found in the nucleoid. Functionally, binds to DNA and alters its conformation. May be involved in regulation of gene expression, nucleoid organization and DNA protection. The polypeptide is Nucleoid-associated protein RPD_0086 (Rhodopseudomonas palustris (strain BisB5)).